Here is a 95-residue protein sequence, read N- to C-terminus: MKFLLLVLAALGFLTQVIPASGGGSKCVSDTPGYCRTHCHRGETALFMCSPFRKCCISYSFLPQPDLPQLIGNHWPSRSRNTQRKNKKQQTTVTP.

A signal peptide spans 1 to 22; sequence MKFLLLVLAALGFLTQVIPASG. Cystine bridges form between Cys-27-Cys-55, Cys-35-Cys-49, and Cys-39-Cys-56. The tract at residues 72–95 is disordered; that stretch reads GNHWPSRSRNTQRKNKKQQTTVTP.

Belongs to the beta-defensin family.

The protein localises to the secreted. Has antibacterial activity. The sequence is that of Beta-defensin 132 (DEFB132) from Macaca fascicularis (Crab-eating macaque).